The sequence spans 233 residues: Mediator of RNA polymerase II transcription subunit 7 (233 aa).

Lys-185 is covalently cross-linked (Glycyl lysine isopeptide (Lys-Gly) (interchain with G-Cter in SUMO1); alternate). Lys-185 participates in a covalent cross-link: Glycyl lysine isopeptide (Lys-Gly) (interchain with G-Cter in SUMO2); alternate. Residues 187–213 are disordered; sequence EPMDADDSNNCTGQNEHQRENSGHRRD. Position 194 is a phosphoserine (Ser-194). Residues 202-213 are compositionally biased toward basic and acidic residues; the sequence is EHQRENSGHRRD.

It belongs to the Mediator complex subunit 7 family. As to quaternary structure, component of the Mediator complex, which is composed of MED1, MED4, MED6, MED7, MED8, MED9, MED10, MED11, MED12, MED13, MED13L, MED14, MED15, MED16, MED17, MED18, MED19, MED20, MED21, MED22, MED23, MED24, MED25, MED26, MED27, MED29, MED30, MED31, CCNC, CDK8 and CDC2L6/CDK11. The MED12, MED13, CCNC and CDK8 subunits form a distinct module termed the CDK8 module. Mediator containing the CDK8 module is less active than Mediator lacking this module in supporting transcriptional activation. Individual preparations of the Mediator complex lacking one or more distinct subunits have been variously termed ARC, CRSP, DRIP, PC2, SMCC and TRAP. Post-translationally, constitutively sumoylated.

Its subcellular location is the nucleus. Its function is as follows. Component of the Mediator complex, a coactivator involved in the regulated transcription of nearly all RNA polymerase II-dependent genes. Mediator functions as a bridge to convey information from gene-specific regulatory proteins to the basal RNA polymerase II transcription machinery. Mediator is recruited to promoters by direct interactions with regulatory proteins and serves as a scaffold for the assembly of a functional preinitiation complex with RNA polymerase II and the general transcription factors. This is Mediator of RNA polymerase II transcription subunit 7 (MED7) from Homo sapiens (Human).